The chain runs to 88 residues: Stannin (88 aa).

At 1 to 10 the chain is on the mitochondrial intermembrane side; that stretch reads MSIMDHSPTT. A helical membrane pass occupies residues 11-31; it reads GVVTVIVILIAIAALGALILG. The Cytoplasmic portion of the chain corresponds to 32 to 88; that stretch reads CWCYLRLQRISQSEDEESIVGDGETKEPFLLVQYSAKGPCVERKAKLMTPNGPEVHG. Serine 49 bears the Phosphoserine mark.

The protein belongs to the stannin family. Monomer.

The protein localises to the mitochondrion outer membrane. Plays a role in the toxic effects of organotins. Plays a role in endosomal maturation. The chain is Stannin (SNN) from Homo sapiens (Human).